Here is a 677-residue protein sequence, read N- to C-terminus: Methionine--tRNA ligase (677 aa).

Residues 15–25 (PYANGSIHLGH) carry the 'HIGH' region motif. Positions 146, 149, 159, and 162 each coordinate Zn(2+). The 'KMSKS' region signature appears at 333–337 (KMSKS). Lys336 provides a ligand contact to ATP. The tRNA-binding domain occupies 575 to 677 (DFAKVDLRVA…AGAKPGHQVK (103 aa)).

This sequence belongs to the class-I aminoacyl-tRNA synthetase family. MetG type 1 subfamily. Homodimer. Zn(2+) is required as a cofactor.

The protein resides in the cytoplasm. It carries out the reaction tRNA(Met) + L-methionine + ATP = L-methionyl-tRNA(Met) + AMP + diphosphate. Is required not only for elongation of protein synthesis but also for the initiation of all mRNA translation through initiator tRNA(fMet) aminoacylation. This is Methionine--tRNA ligase from Escherichia coli O81 (strain ED1a).